The chain runs to 273 residues: Glutamate 5-kinase (273 aa).

Lys-15 lines the ATP pocket. The substrate site is built by Ser-55, Asp-142, and Asn-158. ATP is bound by residues 178–179 (SD) and 220–226 (TGGMLSK).

The protein belongs to the glutamate 5-kinase family.

The protein resides in the cytoplasm. The enzyme catalyses L-glutamate + ATP = L-glutamyl 5-phosphate + ADP. It participates in amino-acid biosynthesis; L-proline biosynthesis; L-glutamate 5-semialdehyde from L-glutamate: step 1/2. Catalyzes the transfer of a phosphate group to glutamate to form L-glutamate 5-phosphate. The chain is Glutamate 5-kinase from Streptococcus pyogenes serotype M3 (strain ATCC BAA-595 / MGAS315).